The sequence spans 153 residues: Lipoprotein signal peptidase (153 aa).

2 consecutive transmembrane segments (helical) span residues 61 to 81 and 85 to 105; these read YFFVILTVLVIGAALFYLVKN and SLWLVLSLILIISGGIGNFID. Residues Asp-114 and Asp-130 contribute to the active site. Residues 125-145 traverse the membrane as a helical segment; the sequence is IFNVADSYLTVGVLLLILILW.

Belongs to the peptidase A8 family.

It is found in the cell membrane. It carries out the reaction Release of signal peptides from bacterial membrane prolipoproteins. Hydrolyzes -Xaa-Yaa-Zaa-|-(S,diacylglyceryl)Cys-, in which Xaa is hydrophobic (preferably Leu), and Yaa (Ala or Ser) and Zaa (Gly or Ala) have small, neutral side chains.. It participates in protein modification; lipoprotein biosynthesis (signal peptide cleavage). This protein specifically catalyzes the removal of signal peptides from prolipoproteins. The protein is Lipoprotein signal peptidase of Streptococcus thermophilus (strain CNRZ 1066).